The primary structure comprises 1399 residues: DNA-directed RNA polymerase subunit beta' (1399 aa).

Zn(2+) is bound by residues Cys70, Cys72, Cys85, and Cys88. 3 residues coordinate Mg(2+): Asp460, Asp462, and Asp464. Zn(2+)-binding residues include Cys814, Cys888, Cys895, and Cys898.

It belongs to the RNA polymerase beta' chain family. The RNAP catalytic core consists of 2 alpha, 1 beta, 1 beta' and 1 omega subunit. When a sigma factor is associated with the core the holoenzyme is formed, which can initiate transcription. Mg(2+) serves as cofactor. Requires Zn(2+) as cofactor.

It catalyses the reaction RNA(n) + a ribonucleoside 5'-triphosphate = RNA(n+1) + diphosphate. Functionally, DNA-dependent RNA polymerase catalyzes the transcription of DNA into RNA using the four ribonucleoside triphosphates as substrates. In Ectopseudomonas mendocina (strain ymp) (Pseudomonas mendocina), this protein is DNA-directed RNA polymerase subunit beta'.